The sequence spans 144 residues: ESNQGYVNSNVGIELARYETTNYTESGSFDTDLARFRGTSDSIHTSRNTYTAADCATGYYSFAHEIGHLQSARDIATDSSTSPYAYGHGYRYEPATGWRTIMAYNCTRSCPRLNYWSNPNISYDIGPDNQRVLVNTKATIAAFR.

A Zn(2+)-binding site is contributed by H64. E65 is an active-site residue. Zn(2+) is bound at residue H68.

This sequence belongs to the peptidase M72 family. It depends on Zn(2+) as a cofactor.

It catalyses the reaction Cleavage of Xaa-|-Asp, Xaa-|-Glu and Xaa-|-cysteic acid bonds.. Metalloprotease, specifically cleaves on the N-terminal side of aspartyl, glutamyl and cysteic acid residues. The chain is Peptidyl-Asp metalloendopeptidase from Pseudomonas fragi.